A 750-amino-acid polypeptide reads, in one-letter code: Serine/threonine-protein kinase GE16371 (750 aa).

Doublecortin domains are found at residues 159 to 245 (LRIK…VEYN) and 315 to 398 (RIVT…AEDF). In terms of domain architecture, Protein kinase spans 479–737 (YTLGKIIGDG…SEDILDHYWT (259 aa)). ATP contacts are provided by residues 485–493 (IGDGNFAIV) and K508. D600 (proton acceptor) is an active-site residue.

The protein belongs to the protein kinase superfamily. CAMK Ser/Thr protein kinase family. CaMK subfamily.

The catalysed reaction is L-seryl-[protein] + ATP = O-phospho-L-seryl-[protein] + ADP + H(+). It catalyses the reaction L-threonyl-[protein] + ATP = O-phospho-L-threonyl-[protein] + ADP + H(+). The protein is Serine/threonine-protein kinase GE16371 of Drosophila yakuba (Fruit fly).